A 467-amino-acid chain; its full sequence is Glutamate--tRNA ligase (467 aa).

The short motif at 9–19 is the 'HIGH' region element; it reads PSPTGFLHIGG. The 'KMSKS' region motif lies at 250–254; the sequence is KLSKR. Position 253 (lysine 253) interacts with ATP.

Belongs to the class-I aminoacyl-tRNA synthetase family. Glutamate--tRNA ligase type 1 subfamily. Monomer.

It is found in the cytoplasm. It carries out the reaction tRNA(Glu) + L-glutamate + ATP = L-glutamyl-tRNA(Glu) + AMP + diphosphate. Functionally, catalyzes the attachment of glutamate to tRNA(Glu) in a two-step reaction: glutamate is first activated by ATP to form Glu-AMP and then transferred to the acceptor end of tRNA(Glu). In Mesomycoplasma hyopneumoniae (strain J / ATCC 25934 / NCTC 10110) (Mycoplasma hyopneumoniae), this protein is Glutamate--tRNA ligase.